The sequence spans 274 residues: Large ribosomal subunit protein uL2cz/uL2cy (274 aa).

Disordered regions lie at residues 1 to 23 and 224 to 274; these read MAIH…SQVK and NPVD…RRSK.

Belongs to the universal ribosomal protein uL2 family. Part of the 50S ribosomal subunit.

The protein resides in the plastid. Its subcellular location is the chloroplast. This chain is Large ribosomal subunit protein uL2cz/uL2cy (rpl2-A), found in Vitis vinifera (Grape).